The following is a 101-amino-acid chain: MKSERLERTAVEAELAGLAGWALNDAASSISKTFKFSNFIEAFGFMTEAAITAEKLNHHPEWFNVYSRVDVTLNTHDAGGLTELDFKLARAMEKAAARRLR.

Belongs to the pterin-4-alpha-carbinolamine dehydratase family.

The enzyme catalyses (4aS,6R)-4a-hydroxy-L-erythro-5,6,7,8-tetrahydrobiopterin = (6R)-L-erythro-6,7-dihydrobiopterin + H2O. This chain is Putative pterin-4-alpha-carbinolamine dehydratase, found in Rhizobium etli (strain ATCC 51251 / DSM 11541 / JCM 21823 / NBRC 15573 / CFN 42).